Consider the following 496-residue polypeptide: MLO-like protein 15 (496 aa).

Residues 1–9 (MAGGGTTLE) lie on the Extracellular side of the membrane. A helical membrane pass occupies residues 10-30 (YTPTWVVALVCSVIVSISFAV). At 31–59 (ERLIHRAGKHFKNNDQKQLFGALQKIKEE) the chain is on the cytoplasmic side. The chain crosses the membrane as a helical span at residues 60–80 (LMLVGFISLLLSVGQSKIAKI). At 81-147 (CISKELSEKF…MSLSALHELH (67 aa)) the chain is on the extracellular side. The helical transmembrane segment at 148-168 (IFIFVLAVAHIIFCLLTIVFG) threads the bilayer. The Cytoplasmic segment spans residues 169–269 (TMKIKQWKKW…KYLMRALNSD (101 aa)). Residues 270 to 290 (FKKVVGISWYLWVFVVLFLLL) form a helical membrane-spanning segment. Position 291 (asparagine 291) is a topological domain, extracellular. A helical membrane pass occupies residues 292 to 312 (IVAWHVYFWLAFIPLILLLAV). The Cytoplasmic portion of the chain corresponds to 313–355 (GTKLEHIITDLAHEVAEKHIAVEGDLVVRPSDDLFWFQSPRLV). A helical membrane pass occupies residues 356–376 (LFLIHFILFQNSFEIAYFFFI). Over 377–397 (LFQFGWDSCIMDHVKFVIPRL) the chain is Extracellular. A helical membrane pass occupies residues 398–418 (VIGVIIQLLCSYSTLPLYALV). Residues 419–496 (TQMGSSFKGA…KEKSEIAHHD (78 aa)) are Cytoplasmic-facing. Residues 432–453 (EQTQEHLVGWAKMAKRGVKKGA) form a calmodulin-binding region. The disordered stretch occupies residues 454–496 (TQVGTSHDATSPRPSIQLNSLLGKGSSQQNQNPKEKSEIAHHD). Polar residues predominate over residues 455-485 (QVGTSHDATSPRPSIQLNSLLGKGSSQQNQN). Over residues 486-496 (PKEKSEIAHHD) the composition is skewed to basic and acidic residues.

Belongs to the MLO family.

It localises to the membrane. May be involved in modulation of pathogen defense and leaf cell death. Activity seems to be regulated by Ca(2+)-dependent calmodulin binding and seems not to require heterotrimeric G proteins. The sequence is that of MLO-like protein 15 (MLO15) from Arabidopsis thaliana (Mouse-ear cress).